A 359-amino-acid chain; its full sequence is Holliday junction branch migration complex subunit RuvB (359 aa).

The segment at 1–22 (MAIVSSNAEPSKGAPRPKPSRV) is disordered. Residues 13–204 (GAPRPKPSRV…FGLIQRLEFY (192 aa)) form a large ATPase domain (RuvB-L) region. 9 residues coordinate ATP: Leu-43, Arg-44, Gly-85, Lys-88, Thr-89, Thr-90, Arg-194, Tyr-204, and Arg-241. Mg(2+) is bound at residue Thr-89. Positions 205-276 (GQEDLQAIVM…LVDEALTLHR (72 aa)) are small ATPAse domain (RuvB-S). The segment at 279–359 (GKGLDASDRR…GWPADEGDAA (81 aa)) is head domain (RuvB-H). DNA-binding residues include Arg-334 and Arg-339.

It belongs to the RuvB family. As to quaternary structure, homohexamer. Forms an RuvA(8)-RuvB(12)-Holliday junction (HJ) complex. HJ DNA is sandwiched between 2 RuvA tetramers; dsDNA enters through RuvA and exits via RuvB. An RuvB hexamer assembles on each DNA strand where it exits the tetramer. Each RuvB hexamer is contacted by two RuvA subunits (via domain III) on 2 adjacent RuvB subunits; this complex drives branch migration. In the full resolvosome a probable DNA-RuvA(4)-RuvB(12)-RuvC(2) complex forms which resolves the HJ.

It localises to the cytoplasm. The enzyme catalyses ATP + H2O = ADP + phosphate + H(+). The RuvA-RuvB-RuvC complex processes Holliday junction (HJ) DNA during genetic recombination and DNA repair, while the RuvA-RuvB complex plays an important role in the rescue of blocked DNA replication forks via replication fork reversal (RFR). RuvA specifically binds to HJ cruciform DNA, conferring on it an open structure. The RuvB hexamer acts as an ATP-dependent pump, pulling dsDNA into and through the RuvAB complex. RuvB forms 2 homohexamers on either side of HJ DNA bound by 1 or 2 RuvA tetramers; 4 subunits per hexamer contact DNA at a time. Coordinated motions by a converter formed by DNA-disengaged RuvB subunits stimulates ATP hydrolysis and nucleotide exchange. Immobilization of the converter enables RuvB to convert the ATP-contained energy into a lever motion, pulling 2 nucleotides of DNA out of the RuvA tetramer per ATP hydrolyzed, thus driving DNA branch migration. The RuvB motors rotate together with the DNA substrate, which together with the progressing nucleotide cycle form the mechanistic basis for DNA recombination by continuous HJ branch migration. Branch migration allows RuvC to scan DNA until it finds its consensus sequence, where it cleaves and resolves cruciform DNA. The sequence is that of Holliday junction branch migration complex subunit RuvB from Synechococcus sp. (strain CC9311).